A 510-amino-acid chain; its full sequence is GMP synthase [glutamine-hydrolyzing] (510 aa).

The region spanning 5–195 is the Glutamine amidotransferase type-1 domain; that stretch reads LVIVVDFGGQ…LFDICNLKGD (191 aa). Cysteine 82 functions as the Nucleophile in the catalytic mechanism. Residues histidine 169 and glutamate 171 contribute to the active site. The 190-residue stretch at 196 to 385 folds into the GMPS ATP-PPase domain; it reads WSMSSFVDEK…LGIPHKLVWR (190 aa). Residue 223–229 coordinates ATP; that stretch reads SGGVDSS.

In terms of assembly, homodimer.

It catalyses the reaction XMP + L-glutamine + ATP + H2O = GMP + L-glutamate + AMP + diphosphate + 2 H(+). Its pathway is purine metabolism; GMP biosynthesis; GMP from XMP (L-Gln route): step 1/1. Functionally, catalyzes the synthesis of GMP from XMP. The polypeptide is GMP synthase [glutamine-hydrolyzing] (Clostridium kluyveri (strain NBRC 12016)).